A 205-amino-acid polypeptide reads, in one-letter code: StAR-related lipid transfer protein 4 (205 aa).

The START domain maps to 1-205 (MEGLSDVASF…NFYGDLRKAL (205 aa)).

The catalysed reaction is cholesterol(in) = cholesterol(out). Its function is as follows. Involved in the intracellular transport of cholesterol. Binds cholesterol or other sterols. The protein is StAR-related lipid transfer protein 4 (STARD4) of Homo sapiens (Human).